The following is a 460-amino-acid chain: Argininosuccinate lyase (460 aa).

This sequence belongs to the lyase 1 family. Argininosuccinate lyase subfamily.

The protein resides in the cytoplasm. It catalyses the reaction 2-(N(omega)-L-arginino)succinate = fumarate + L-arginine. Its pathway is amino-acid biosynthesis; L-arginine biosynthesis; L-arginine from L-ornithine and carbamoyl phosphate: step 3/3. This is Argininosuccinate lyase from Streptococcus uberis (strain ATCC BAA-854 / 0140J).